The primary structure comprises 315 residues: MADIPDNAPQHCPGTDSTEAGKSSACQGCPNQSICASGAAAGPDPAIEEIKEKMSLVKHKILVLSGKGGVGKSTFSAHLAHGLAQDEGKEVALLDVDICGPSIPKMMGLEGEQVHQSGSGWSPVYVEDNLAVMSVGFLLSSPDDAVIWRGPKKNGMIKQFLRDVDWGDVDYLIVDTPPGTSDEHLSVVQYLSAAGIDGAVIITTPQEVSLQDVRKEINFCRKVKLPIIGVVENMSGFICPKCKNESQIFPPTTGGAEKMCTDLSVSLLGKVPLDPNIGKSCDTGKSFFTEIPDSPATLSYRKIIQRIQDYCEKKK.

Residues 1-23 (MADIPDNAPQHCPGTDSTEAGKS) form a disordered region. Positions 12, 26, 29, and 35 each coordinate [4Fe-4S] cluster. Residue 66–73 (GKGGVGKS) coordinates ATP. Cysteine 239 and cysteine 242 together coordinate [4Fe-4S] cluster.

Belongs to the Mrp/NBP35 ATP-binding proteins family. NUBP1/NBP35 subfamily. Heterotetramer of 2 nubp1 and 2 nubp2 chains. Requires [4Fe-4S] cluster as cofactor.

The protein resides in the cytoplasm. Functionally, component of the cytosolic iron-sulfur (Fe/S) protein assembly (CIA) machinery. Required for maturation of extramitochondrial Fe-S proteins. The nubp1-nubp2 heterotetramer forms a Fe-S scaffold complex, mediating the de novo assembly of an Fe-S cluster and its transfer to target apoproteins. This Xenopus laevis (African clawed frog) protein is Cytosolic Fe-S cluster assembly factor nubp1-A (nubp1-A).